The sequence spans 133 residues: Small ribosomal subunit protein uS8 (133 aa).

Belongs to the universal ribosomal protein uS8 family. Part of the 30S ribosomal subunit. Contacts proteins S5 and S12.

Its function is as follows. One of the primary rRNA binding proteins, it binds directly to 16S rRNA central domain where it helps coordinate assembly of the platform of the 30S subunit. In Trichormus variabilis (strain ATCC 29413 / PCC 7937) (Anabaena variabilis), this protein is Small ribosomal subunit protein uS8.